We begin with the raw amino-acid sequence, 382 residues long: uncharacterized protein (382 aa).

A run of 12 helical transmembrane segments spans residues 8–28 (VLLLLCGLLLFTISIAVLNTL), 41–61 (WQVGMVSSSYFSGNLVGTLIA), 73–93 (SYHYSCILFALATCGLMLSVD), 94–114 (FWSWLGWRFFAGVACALIWVI), 133–153 (AAYMMVYYLGTVTGQLLLGVV), 157–177 (LLSVIPWVSALVITAMLPLLF), 208–228 (GCIISGVLLGSLYGLLPLYLS), 235–255 (ASVGWWMALLVSSGIIGQWPI), 274–294 (VVILGSIAILGNYALAPALFI), 295–315 (LGCAGFTLYPVAMAWACEKVS), 325–345 (ALLMSYTIGSLTGPTMTSLLM), and 349–369 (SDNLLFIMIAGVALVYLMMLL).

It belongs to the major facilitator superfamily. YcaD (TC 2.A.1.26) family.

It is found in the cell inner membrane. This is an uncharacterized protein from Yersinia enterocolitica serotype O:8 / biotype 1B (strain NCTC 13174 / 8081).